The following is a 132-amino-acid chain: Large ribosomal subunit protein bL17 (132 aa).

This sequence belongs to the bacterial ribosomal protein bL17 family. In terms of assembly, part of the 50S ribosomal subunit. Contacts protein L32.

In Ruthia magnifica subsp. Calyptogena magnifica, this protein is Large ribosomal subunit protein bL17.